The following is a 357-amino-acid chain: Methylthioribose-1-phosphate isomerase (357 aa).

Residues 49-51, arginine 89, and glutamine 197 contribute to the substrate site; that span reads RGA. Aspartate 238 (proton donor) is an active-site residue. 248-249 contributes to the substrate binding site; sequence NK.

Belongs to the eIF-2B alpha/beta/delta subunits family. MtnA subfamily.

It carries out the reaction 5-(methylsulfanyl)-alpha-D-ribose 1-phosphate = 5-(methylsulfanyl)-D-ribulose 1-phosphate. It participates in amino-acid biosynthesis; L-methionine biosynthesis via salvage pathway; L-methionine from S-methyl-5-thio-alpha-D-ribose 1-phosphate: step 1/6. Catalyzes the interconversion of methylthioribose-1-phosphate (MTR-1-P) into methylthioribulose-1-phosphate (MTRu-1-P). The chain is Methylthioribose-1-phosphate isomerase from Leptospira biflexa serovar Patoc (strain Patoc 1 / Ames).